The primary structure comprises 341 residues: Biotin synthase (341 aa).

The Radical SAM core domain occupies 39-263 (EQVQLCTLLS…VAVARITMPL (225 aa)). Residues Cys54, Cys58, and Cys61 each coordinate [4Fe-4S] cluster. Residues Cys98, Cys129, Cys189, and Arg267 each coordinate [2Fe-2S] cluster.

This sequence belongs to the radical SAM superfamily. Biotin synthase family. Homodimer. [4Fe-4S] cluster serves as cofactor. It depends on [2Fe-2S] cluster as a cofactor.

The enzyme catalyses (4R,5S)-dethiobiotin + (sulfur carrier)-SH + 2 reduced [2Fe-2S]-[ferredoxin] + 2 S-adenosyl-L-methionine = (sulfur carrier)-H + biotin + 2 5'-deoxyadenosine + 2 L-methionine + 2 oxidized [2Fe-2S]-[ferredoxin]. It participates in cofactor biosynthesis; biotin biosynthesis; biotin from 7,8-diaminononanoate: step 2/2. Functionally, catalyzes the conversion of dethiobiotin (DTB) to biotin by the insertion of a sulfur atom into dethiobiotin via a radical-based mechanism. The polypeptide is Biotin synthase (Erythrobacter litoralis (strain HTCC2594)).